We begin with the raw amino-acid sequence, 150 residues long: Large ribosomal subunit protein uL15 (150 aa).

Positions 1 to 57 (MTLRLESLKPNKGARRRKLRKGRGIAAGQGASCGFGMRGQKSRSGRPTRPGFEGGQM) are disordered. Over residues 12 to 23 (KGARRRKLRKGR) the composition is skewed to basic residues. Positions 25–37 (IAAGQGASCGFGM) are enriched in gly residues.

This sequence belongs to the universal ribosomal protein uL15 family. Part of the 50S ribosomal subunit.

Its function is as follows. Binds to the 23S rRNA. This Synechococcus sp. (strain CC9311) protein is Large ribosomal subunit protein uL15.